A 507-amino-acid chain; its full sequence is Beta-glucosidase 12 (507 aa).

The N-terminal stretch at 1 to 22 is a signal peptide; that stretch reads MRTIYLSLLVFIIVLALNEVMA. Position 50 (Gln-50) interacts with a beta-D-glucoside. Asn-81 is a glycosylation site (N-linked (GlcNAc...) asparagine). Residues His-154 and 199-200 contribute to the a beta-D-glucoside site; that span reads NE. The active-site Proton donor is the Glu-200. A disulfide bridge connects residues Cys-219 and Cys-227. Asn-226 carries an N-linked (GlcNAc...) asparagine glycan. Tyr-344 serves as a coordination point for a beta-D-glucoside. Asn-358 carries an N-linked (GlcNAc...) asparagine glycan. Residues Glu-414, Trp-459, 466-467, and Phe-475 each bind a beta-D-glucoside; that span reads EW. Glu-414 (nucleophile) is an active-site residue.

It belongs to the glycosyl hydrolase 1 family.

It carries out the reaction Hydrolysis of terminal, non-reducing beta-D-glucosyl residues with release of beta-D-glucose.. This is Beta-glucosidase 12 from Arabidopsis thaliana (Mouse-ear cress).